Reading from the N-terminus, the 615-residue chain is uncharacterized protein (615 aa).

Serine 48 bears the Phosphoserine mark. Acidic residues predominate over residues 424–433 (DRENELEEGS). The disordered stretch occupies residues 424 to 615 (DRENELEEGS…YARKKTKKNV (192 aa)). 4 stretches are compositionally biased toward basic and acidic residues: residues 439 to 476 (DNER…KEVG), 484 to 496 (DGNK…KEVA), 504 to 521 (ESEK…KEVA), and 529 to 561 (ESEK…EPSK). 2 stretches are compositionally biased toward basic residues: residues 579 to 589 (KKPKVVKKVAK) and 606 to 615 (YARKKTKKNV).

This is an uncharacterized protein from Arabidopsis thaliana (Mouse-ear cress).